Reading from the N-terminus, the 336-residue chain is Anthranilate phosphoribosyltransferase (336 aa).

Residues G83, 86-87 (GD), T91, 93-96 (NIST), 111-119 (KHGNRSVSS), and S123 contribute to the 5-phospho-alpha-D-ribose 1-diphosphate site. G83 lines the anthranilate pocket. S95 contributes to the Mg(2+) binding site. N114 serves as a coordination point for anthranilate. R169 is an anthranilate binding site. Residues D227 and E228 each contribute to the Mg(2+) site.

It belongs to the anthranilate phosphoribosyltransferase family. As to quaternary structure, homodimer. Requires Mg(2+) as cofactor.

It catalyses the reaction N-(5-phospho-beta-D-ribosyl)anthranilate + diphosphate = 5-phospho-alpha-D-ribose 1-diphosphate + anthranilate. It functions in the pathway amino-acid biosynthesis; L-tryptophan biosynthesis; L-tryptophan from chorismate: step 2/5. In terms of biological role, catalyzes the transfer of the phosphoribosyl group of 5-phosphorylribose-1-pyrophosphate (PRPP) to anthranilate to yield N-(5'-phosphoribosyl)-anthranilate (PRA). The sequence is that of Anthranilate phosphoribosyltransferase from Vibrio campbellii (strain ATCC BAA-1116).